A 303-amino-acid chain; its full sequence is Plasmodesmata-located protein 1 (303 aa).

A signal peptide spans 1-21 (MKLTYQFFIFWFFLPFFAISG). The Extracellular portion of the chain corresponds to 22 to 268 (DDDYKNLIFK…GEKRQHTERT (247 aa)). Gnk2-homologous domains are found at residues 27-136 (NLIF…SSGF) and 141-248 (GTEM…YYSH). 6 cysteine pairs are disulfide-bonded: cysteine 33-cysteine 108, cysteine 84-cysteine 93, cysteine 96-cysteine 127, cysteine 149-cysteine 226, cysteine 202-cysteine 211, and cysteine 214-cysteine 239. Residues 269–289 (IALAVGGVFVLGFVIVCLLVL) form a helical membrane-spanning segment. The tract at residues 269-289 (IALAVGGVFVLGFVIVCLLVL) is necessary and sufficient for plasmodesmal targeting. The Cytoplasmic segment spans residues 290–303 (RSAMKKKSNKYDAY).

It belongs to the cysteine-rich repeat secretory protein family. Plasmodesmata-located proteins (PDLD) subfamily. In terms of assembly, interacts with AZI1. Interacts with PDLP5. Does not interact with DIR1. As to quaternary structure, (Microbial infection) Interacts with Grapevine fanleaf virus (GFLV) 2B-MP. Interacts with Cauliflower mosaic virus (CaMV) movement protein. As to expression, highly expressed in cell suspension. Expressed in epidermal and spongy mesophyll cells, and the cell wall interface at the base of the leaf trichome (at protein level). Expressed in haustoria-containing cells.

Its subcellular location is the cell membrane. The protein localises to the cell junction. It is found in the plasmodesma. Its function is as follows. Modulates cell-to-cell trafficking. Required for systemic acquired resistance (SAR) which is mediated by the signaling molecules azelaic acid (AzA), glycerol-3-phosphate (G3P), and salicylic acid (SA). Required for the proper localization and stability of AZI1 which is involved in SAR. Mediates callose deposition during downy mildew fungal infection around haustoria. Haustoria are unicellular protrusions from hyphae and function as the site of molecular exchange of nutrients and effectors between host and pathogen. This chain is Plasmodesmata-located protein 1, found in Arabidopsis thaliana (Mouse-ear cress).